Consider the following 533-residue polypeptide: MDDNRIRSILVLGGGTAGWMSACYLSKALGPGVEVTVLEAPSISRIRVGEATIPNLHKVFFDFLGIAEDEWMRECNASYKAAVRFVNWRTPGDGQATPRRRPDGRPDHFDHLFGQLPEHENLPLSQYWAHRRLNGLTDEPFDRSCYVQPELLDRKLSPRLMDGTKLASYAWHFDADLVADFLCRFAVQKLNVTHVQDVFTHADLDQRGHITAVNTESGRTLAADLFIDCSGFRSVLMGKVMQEPFLDMSKHLLNDRAVALMLPHDDEKVGIEPYTSSLAMRSGWSWKIPLLGRFGSGYVYSSQFTSQDEAAEELCRMWDVDPAEQTFNNVRFRVGRSRRAWVRNCVAIGVSAMFVEPLESTGLYFSYASLYQLVKHFPDKRFRPILADRFNREVATMYDDTRDFLQAHFSLSPRDDSEFWRACKELPFADGFAEKVEMYRAGLPVELPVTIDDGHYYGNFEAEFRNFWTNSNYYCIFAGLGFLPEHPLPVLEFRPEAVDRAEPVFAAVRRRTEELVATAPTMQAYLRRLHQGT.

Residues Gly-14, Thr-16, Ala-17, Ala-40, Glu-50, and Ala-51 each coordinate FAD. Lys-80 is a catalytic residue. Glu-359 provides a ligand contact to L-tryptophan. Residues Thr-361 and Gly-362 each contribute to the chloride site. FAD is bound at residue Leu-363. L-tryptophan-binding residues include Tyr-456, Tyr-457, Glu-463, and Phe-467.

The protein belongs to the flavin-dependent halogenase family. Bacterial tryptophan halogenase subfamily.

The enzyme catalyses L-tryptophan + FADH2 + chloride + O2 = 7-chloro-L-tryptophan + FAD + 2 H2O. Its function is as follows. Involved in the biosynthesis of kutznerides, actinomycete-derived antifungal and antimicrobial cyclic hexadepsipeptides. Together with KtzR, catalyzes the regiospecific dichlorination of L-tryptophan (L-Trp) to produce 6,7-dichloro-L-tryptophan. KtzQ catalyzes the chlorination of L-Trp at C7 position to yield 7-chlorotryptophan. Can also use 6-chloro-L-tryptophan as substrate and form 6,7-dichloro-L-tryptophan, but has a preference for halogenation at the 7 position of unmodified L-Trp. Cannot use piperazic acid or gamma,delta-dehydropiperazic acid. This is Tryptophan 7-halogenase KtzQ from Kutzneria sp. (strain 744).